A 349-amino-acid polypeptide reads, in one-letter code: Phosphoribosylformylglycinamidine cyclo-ligase (349 aa).

It belongs to the AIR synthase family.

It localises to the cytoplasm. The enzyme catalyses 2-formamido-N(1)-(5-O-phospho-beta-D-ribosyl)acetamidine + ATP = 5-amino-1-(5-phospho-beta-D-ribosyl)imidazole + ADP + phosphate + H(+). Its pathway is purine metabolism; IMP biosynthesis via de novo pathway; 5-amino-1-(5-phospho-D-ribosyl)imidazole from N(2)-formyl-N(1)-(5-phospho-D-ribosyl)glycinamide: step 2/2. In Lactobacillus delbrueckii subsp. bulgaricus (strain ATCC BAA-365 / Lb-18), this protein is Phosphoribosylformylglycinamidine cyclo-ligase.